We begin with the raw amino-acid sequence, 574 residues long: Sulfate adenylyltransferase (574 aa).

The interval 1–170 (MANPPHGGVL…VEAIDRLEHY (170 aa)) is N-terminal. Residues 171 to 395 (DYVGLRYTPA…LRESHPPRNQ (225 aa)) form a catalytic region. Residue Q198 coordinates sulfate. ATP-binding positions include 198 to 201 (QTRN) and 292 to 295 (GRDH). Residues T199, R200, and N201 contribute to the active site. Residue R200 participates in sulfate binding. Residue A296 participates in sulfate binding. M334 provides a ligand contact to ATP. The tract at residues 396–574 (QGFTVFLTGY…LESQGLLTQL (179 aa)) is allosteric regulation domain; adenylyl-sulfate kinase-like. 3'-phosphoadenylyl sulfate contacts are provided by residues 435-438 (ETVR), R452, 478-479 (IA), and R516.

In the N-terminal section; belongs to the sulfate adenylyltransferase family. It in the C-terminal section; belongs to the APS kinase family. Homohexamer. Dimer of trimers.

It is found in the cytoplasm. It catalyses the reaction sulfate + ATP + H(+) = adenosine 5'-phosphosulfate + diphosphate. The protein operates within sulfur metabolism; hydrogen sulfide biosynthesis; sulfite from sulfate: step 1/3. Allosterically inhibited by 3'-phosphoadenosine 5'-phosphosulfate (PAPS). In terms of biological role, catalyzes the first intracellular reaction of sulfate assimilation, forming adenosine-5'-phosphosulfate (APS) from inorganic sulfate and ATP. Plays an important role in sulfate activation as a component of the biosynthesis pathway of sulfur-containing amino acids. The sequence is that of Sulfate adenylyltransferase from Phaeosphaeria nodorum (strain SN15 / ATCC MYA-4574 / FGSC 10173) (Glume blotch fungus).